An 839-amino-acid polypeptide reads, in one-letter code: Probable beta-glucosidase I (839 aa).

Residue asparagine 197 is glycosylated (N-linked (GlcNAc...) asparagine). The active site involves aspartate 225. In terms of domain architecture, PA14 spans aspartate 395–valine 555. The N-linked (GlcNAc...) asparagine glycan is linked to asparagine 620.

It belongs to the glycosyl hydrolase 3 family.

It localises to the secreted. It catalyses the reaction Hydrolysis of terminal, non-reducing beta-D-glucosyl residues with release of beta-D-glucose.. The protein operates within glycan metabolism; cellulose degradation. Beta-glucosidases are one of a number of cellulolytic enzymes involved in the degradation of cellulosic biomass. Catalyzes the last step releasing glucose from the inhibitory cellobiose. This Aspergillus flavus (strain ATCC 200026 / FGSC A1120 / IAM 13836 / NRRL 3357 / JCM 12722 / SRRC 167) protein is Probable beta-glucosidase I (bglI).